The primary structure comprises 576 residues: Calcium-dependent protein kinase 11 (576 aa).

A lipid anchor (N-myristoyl glycine) is attached at Gly-2. The segment at 27–88 (PADAAPPALP…ANKAAPKVKR (62 aa)) is disordered. Residues 41–56 (APSDQAPEPVTIPPSE) are compositionally biased toward low complexity. In terms of domain architecture, Protein kinase spans 113–371 (YTIGKKLGQG…AHEALCHPWV (259 aa)). ATP-binding positions include 119 to 127 (LGQGQFGTT) and Lys-142. The Proton acceptor role is filled by Asp-237. The tract at residues 377–407 (APDKPLDSAVLSRLKQFSAMNKLKKMALRVI) is autoinhibitory domain. EF-hand domains follow at residues 414 to 449 (EEIA…VGAN), 450 to 485 (LMDS…INKV), 486 to 521 (EKED…FGIG), and 522 to 555 (DTRI…GNNA). The Ca(2+) site is built by Asp-427, Asp-429, Ser-431, His-433, Glu-438, Asp-463, Asp-465, Ser-467, Thr-469, Glu-474, Asp-499, Asp-501, Ser-503, Tyr-505, Glu-510, Asp-533, Asp-535, Asp-537, Arg-539, and Glu-544.

The protein belongs to the protein kinase superfamily. Ser/Thr protein kinase family. CDPK subfamily.

Its subcellular location is the membrane. It catalyses the reaction L-seryl-[protein] + ATP = O-phospho-L-seryl-[protein] + ADP + H(+). It carries out the reaction L-threonyl-[protein] + ATP = O-phospho-L-threonyl-[protein] + ADP + H(+). With respect to regulation, activated by calcium. Autophosphorylation may play an important role in the regulation of the kinase activity. Functionally, may play a role in signal transduction pathways that involve calcium as a second messenger. The protein is Calcium-dependent protein kinase 11 of Oryza sativa subsp. japonica (Rice).